Consider the following 184-residue polypeptide: Ribosome-recycling factor (184 aa).

Belongs to the RRF family.

Its subcellular location is the cytoplasm. In terms of biological role, responsible for the release of ribosomes from messenger RNA at the termination of protein biosynthesis. May increase the efficiency of translation by recycling ribosomes from one round of translation to another. The sequence is that of Ribosome-recycling factor from Clostridium botulinum (strain ATCC 19397 / Type A).